A 387-amino-acid polypeptide reads, in one-letter code: MNLHEYQAKDLLESYGLKVQKGIVAHNPNEAAQAFDQLGGKFAVVKAQVHAGGRGKAGGVKVVKSSQEAREVAESLIGKNLVTFQTDAEGQPVNSVGVFEDVYPVTRELYLGAVVDRSSRKVTFMASTEGGVDIEEVAHNSPEKILKVEVDPLVGLQPFQAREVAFKLGLEGKQINDFVKTMLGAYKAFIECDFALFEINPLAVRENGEIVCVDGKINLDSNALYRHPKLLALRDKSQENAKELKASEHELNYVALEGNIGCMVNGAGLAMATMDIIQLYGGKPANFLDVGGGATKERVIEAFKLILDDENVKAVLINIFGGIVRCDMIAEAIIEAVKEVNVTVPVVVRLEGNNAEKGAKILADSGLKLIPADGLADAADKVVKSLG.

The 237-residue stretch at 9–245 (KDLLESYGLK…KSQENAKELK (237 aa)) folds into the ATP-grasp domain. Residues Lys-46, 53-55 (GRG), Glu-100, Tyr-103, and Glu-108 each bind ATP. Mg(2+)-binding residues include Asn-200 and Asp-214. Substrate contacts are provided by residues Asn-265 and 322–324 (GIV).

It belongs to the succinate/malate CoA ligase beta subunit family. As to quaternary structure, heterotetramer of two alpha and two beta subunits. It depends on Mg(2+) as a cofactor.

It carries out the reaction succinate + ATP + CoA = succinyl-CoA + ADP + phosphate. The enzyme catalyses GTP + succinate + CoA = succinyl-CoA + GDP + phosphate. The protein operates within carbohydrate metabolism; tricarboxylic acid cycle; succinate from succinyl-CoA (ligase route): step 1/1. Functionally, succinyl-CoA synthetase functions in the citric acid cycle (TCA), coupling the hydrolysis of succinyl-CoA to the synthesis of either ATP or GTP and thus represents the only step of substrate-level phosphorylation in the TCA. The beta subunit provides nucleotide specificity of the enzyme and binds the substrate succinate, while the binding sites for coenzyme A and phosphate are found in the alpha subunit. The polypeptide is Succinate--CoA ligase [ADP-forming] subunit beta (Francisella tularensis subsp. novicida (strain U112)).